The chain runs to 184 residues: MIQLAQNAKHPSKKEQKPLVNEQIAFNQFTLIDENSTNLGIVKMENALKLAQEKQLDLVLIAPNPTKPIVKLLDFGRYTYDLKRKKRQAKKNQTIIQTKEVVVKPTIAKHDLEFRAKQSKNWIEKGHHVKFIVRAFGRVSTRIELIEKVFDDFYQLVKDVVEIQKPLTASSKTMYAALLVPLKR.

Belongs to the IF-3 family. As to quaternary structure, monomer.

It is found in the cytoplasm. IF-3 binds to the 30S ribosomal subunit and shifts the equilibrium between 70S ribosomes and their 50S and 30S subunits in favor of the free subunits, thus enhancing the availability of 30S subunits on which protein synthesis initiation begins. This chain is Translation initiation factor IF-3, found in Mycoplasma genitalium (strain ATCC 33530 / DSM 19775 / NCTC 10195 / G37) (Mycoplasmoides genitalium).